Consider the following 169-residue polypeptide: Peptide methionine sulfoxide reductase MsrA (169 aa).

Residue cysteine 11 is part of the active site.

This sequence belongs to the MsrA Met sulfoxide reductase family.

The catalysed reaction is L-methionyl-[protein] + [thioredoxin]-disulfide + H2O = L-methionyl-(S)-S-oxide-[protein] + [thioredoxin]-dithiol. It catalyses the reaction [thioredoxin]-disulfide + L-methionine + H2O = L-methionine (S)-S-oxide + [thioredoxin]-dithiol. Functionally, has an important function as a repair enzyme for proteins that have been inactivated by oxidation. Catalyzes the reversible oxidation-reduction of methionine sulfoxide in proteins to methionine. This chain is Peptide methionine sulfoxide reductase MsrA, found in Leifsonia xyli subsp. xyli (strain CTCB07).